The following is a 285-amino-acid chain: Homeobox protein Hox-A4 (285 aa).

Disordered regions lie at residues 19-70 and 94-130; these read PFEE…APRA and ASPG…TTPA. The segment covering 27-41 has biased composition (gly residues); the sequence is GGPGGGDGAVGGGPG. Residues 44–70 are compositionally biased toward low complexity; the sequence is RPQSAPHLPAPNPHAARQPPAYYAPRA. The span at 106 to 118 shows a compositional bias: pro residues; the sequence is GAHPSPAPQPPVP. The short motif at 159–164 is the Antp-type hexapeptide element; the sequence is VYPWMK. Positions 180 to 239 form a DNA-binding region, homeobox; sequence PKRSRTAYTRQQVLELEKEFHFNRYLTRRRRIEIAHTLCLSERQVKIWFQNRRMKWKKDH. Residues 238-285 form a disordered region; sequence DHKLPNTKMRSSNTASAPAGPPGKAQTHSPHHHPHPLPGASTPIPSSI.

The protein belongs to the Antp homeobox family. Deformed subfamily.

The protein resides in the nucleus. Sequence-specific transcription factor which is part of a developmental regulatory system that provides cells with specific positional identities on the anterior-posterior axis. Binds to sites in the 5'-flanking sequence of its coding region with various affinities. The consensus sequences of the high and low affinity binding sites are 5'-TAATGA[CG]-3' and 5'-CTAATTTT-3'. In Mus musculus (Mouse), this protein is Homeobox protein Hox-A4 (Hoxa4).